We begin with the raw amino-acid sequence, 398 residues long: 1-deoxy-D-xylulose 5-phosphate reductoisomerase (398 aa).

NADPH is bound by residues Thr10, Gly11, Ser12, Ile13, Asn38, and Asn124. Residue Lys125 coordinates 1-deoxy-D-xylulose 5-phosphate. An NADPH-binding site is contributed by Glu126. Residue Asp150 participates in Mn(2+) binding. The 1-deoxy-D-xylulose 5-phosphate site is built by Ser151, Glu152, Ser176, and His199. Glu152 is a binding site for Mn(2+). Gly205 contributes to the NADPH binding site. 1-deoxy-D-xylulose 5-phosphate-binding residues include Ser212, Asn217, Lys218, and Glu221. Glu221 lines the Mn(2+) pocket.

This sequence belongs to the DXR family. The cofactor is Mg(2+). Mn(2+) is required as a cofactor.

The enzyme catalyses 2-C-methyl-D-erythritol 4-phosphate + NADP(+) = 1-deoxy-D-xylulose 5-phosphate + NADPH + H(+). It participates in isoprenoid biosynthesis; isopentenyl diphosphate biosynthesis via DXP pathway; isopentenyl diphosphate from 1-deoxy-D-xylulose 5-phosphate: step 1/6. In terms of biological role, catalyzes the NADPH-dependent rearrangement and reduction of 1-deoxy-D-xylulose-5-phosphate (DXP) to 2-C-methyl-D-erythritol 4-phosphate (MEP). In Crocosphaera subtropica (strain ATCC 51142 / BH68) (Cyanothece sp. (strain ATCC 51142)), this protein is 1-deoxy-D-xylulose 5-phosphate reductoisomerase.